The following is a 78-amino-acid chain: Acyl carrier protein (78 aa).

The Carrier domain maps to 2–77 (SDTADRVKKI…DAIKYIDENK (76 aa)). O-(pantetheine 4'-phosphoryl)serine is present on S37.

The protein belongs to the acyl carrier protein (ACP) family. Post-translationally, 4'-phosphopantetheine is transferred from CoA to a specific serine of apo-ACP by AcpS. This modification is essential for activity because fatty acids are bound in thioester linkage to the sulfhydryl of the prosthetic group.

It is found in the cytoplasm. It functions in the pathway lipid metabolism; fatty acid biosynthesis. Its function is as follows. Carrier of the growing fatty acid chain in fatty acid biosynthesis. This chain is Acyl carrier protein, found in Novosphingobium aromaticivorans (strain ATCC 700278 / DSM 12444 / CCUG 56034 / CIP 105152 / NBRC 16084 / F199).